A 124-amino-acid chain; its full sequence is MATINQLVRKPRVKKVVKSNVPALQACPQKRGVCTRVYTTTPKKPNSALRKVCRIRLTNGFEVTSYIGGEGHNLQEHSVVLIRGGRVKDLPGVRYHTVRGALDCAGVKDRKQGRSKYGVKRPKA.

Asp89 is subject to 3-methylthioaspartic acid.

The protein belongs to the universal ribosomal protein uS12 family. As to quaternary structure, part of the 30S ribosomal subunit. Contacts proteins S8 and S17. May interact with IF1 in the 30S initiation complex.

Functionally, with S4 and S5 plays an important role in translational accuracy. Interacts with and stabilizes bases of the 16S rRNA that are involved in tRNA selection in the A site and with the mRNA backbone. Located at the interface of the 30S and 50S subunits, it traverses the body of the 30S subunit contacting proteins on the other side and probably holding the rRNA structure together. The combined cluster of proteins S8, S12 and S17 appears to hold together the shoulder and platform of the 30S subunit. The chain is Small ribosomal subunit protein uS12 from Mannheimia succiniciproducens (strain KCTC 0769BP / MBEL55E).